The sequence spans 188 residues: Adenine phosphoribosyltransferase (188 aa).

134 to 138 (ATGGS) serves as a coordination point for AMP.

This sequence belongs to the purine/pyrimidine phosphoribosyltransferase family. As to quaternary structure, homodimer. Requires Mg(2+) as cofactor.

It localises to the cytoplasm. The protein resides in the nucleus. It carries out the reaction AMP + diphosphate = 5-phospho-alpha-D-ribose 1-diphosphate + adenine. It functions in the pathway purine metabolism; AMP biosynthesis via salvage pathway; AMP from adenine: step 1/1. Catalyzes a salvage reaction resulting in the formation of AMP, that is energically less costly than de novo synthesis. The chain is Adenine phosphoribosyltransferase (APT1) from Candida albicans (strain SC5314 / ATCC MYA-2876) (Yeast).